Reading from the N-terminus, the 678-residue chain is MGDSNVDTGTTTSEMVAEEVSLFSATDMVLFSLIVGLLTYWFIFRKKKDEVPEFSKIETTTSSVKDSSFVEKMKKTGRNIIVFYGSQTGTAEEFANRLSKDAHRYGMRGMAADPEEYDLSDLSSLPEIENALAVFCMATYGEGDPTDNAQDFYDWLQEADVDLTGVKYAVFGLGNKTYEHFNAMGKYVDKRLEQLGAQRIFDLGLGDDDGNLEEDFITWREQFWPAVCEHFGVEATGEESSIRQYELVVHTDMDTAVVYTGEMGRLKSYENQKPPFDAKNPFLAVVTTNRKLNQGTERHLMHLELDISDSKIRYESGDHVAVYPANDSALVNQLGEILGTDLDIVMSLNNLDEESNKRHPFPCPTTYRTALTYYLDITNPPRTNVLYELAQYASEPSEQEQLRKMASSSGEGKELYLSWVVEARRHILAILQDYPSLRPPIDHLCERLPRLQARYYSIASSSKVHPNSVHICAVVVEYETKSGRVNKGVATSWLRAKEPAGENGRRALVPMFVRKSQFRLPFKATTPVIMVGPGTGVAPFIGFIQERAWLQEQGKEVGETLLYYGCRRSDEDYLYREELAQFHAKGALTRLSVAFSREQPQKVYVQHLLKRDKEHLWKLIHDGGAHIYICGDARNMARDVQNTFCDIVAEQGPMEHAQAVDYVKKLMTKGRYSLDVWS.

Position 2 is an N-acetylglycine (Gly-2). The Lumenal segment spans residues 2-22 (GDSNVDTGTTTSEMVAEEVSL). The helical transmembrane segment at 23 to 43 (FSATDMVLFSLIVGLLTYWFI) threads the bilayer. Topologically, residues 44–678 (FRKKKDEVPE…KGRYSLDVWS (635 aa)) are cytoplasmic. A Phosphoserine modification is found at Ser-63. A Flavodoxin-like domain is found at 80–224 (IIVFYGSQTG…DFITWREQFW (145 aa)). FMN is bound by residues 86–91 (SQTGTA), 138–141 (ATYG), 173–182 (LGNKTYEHFN), and Asp-208. Residues 279–521 (KNPFLAVVTT…FVRKSQFRLP (243 aa)) enclose the FAD-binding FR-type domain. Arg-298 contacts NADP(+). FAD contacts are provided by residues Arg-424, 454-457 (RYYS), 472-474 (CAV), Tyr-478, and 488-491 (GVAT). NADP(+) is bound by residues Thr-535, 596–597 (SR), 602–606 (KVYVQ), and Asp-639. Trp-677 provides a ligand contact to FAD.

It belongs to the NADPH--cytochrome P450 reductase family. This sequence in the N-terminal section; belongs to the flavodoxin family. In the C-terminal section; belongs to the flavoprotein pyridine nucleotide cytochrome reductase family. The cofactor is FAD. It depends on FMN as a cofactor.

Its subcellular location is the endoplasmic reticulum membrane. The enzyme catalyses 2 oxidized [cytochrome P450] + NADPH = 2 reduced [cytochrome P450] + NADP(+) + H(+). Its function is as follows. This enzyme is required for electron transfer from NADP to cytochrome P450 in microsomes. It can also provide electron transfer to heme oxygenase and cytochrome B5. This Sus scrofa (Pig) protein is NADPH--cytochrome P450 reductase.